The chain runs to 398 residues: Acetate kinase (398 aa).

Asn8 is a Mg(2+) binding site. ATP is bound at residue Lys15. Arg89 lines the substrate pocket. Residue Asp146 is the Proton donor/acceptor of the active site. Residues 206–210, 283–285, and 331–335 each bind ATP; these read HIGNG, DMR, and GMGEN. Glu383 contacts Mg(2+).

Belongs to the acetokinase family. Homodimer. The cofactor is Mg(2+). It depends on Mn(2+) as a cofactor.

The protein localises to the cytoplasm. The enzyme catalyses acetate + ATP = acetyl phosphate + ADP. The protein operates within metabolic intermediate biosynthesis; acetyl-CoA biosynthesis; acetyl-CoA from acetate: step 1/2. Functionally, catalyzes the formation of acetyl phosphate from acetate and ATP. Can also catalyze the reverse reaction. In Streptococcus pyogenes serotype M4 (strain MGAS10750), this protein is Acetate kinase.